The following is a 1658-amino-acid chain: Collagen alpha-1(XXVII) chain B (1658 aa).

A signal peptide spans 1–38 (MEPDNTPSSRLRAAGVGGRAVFFCMVLYCTCCLRLAQA). A Laminin G-like domain is found at 66 to 229 (GVILTTRARI…NYCKYIKKQC (164 aa)). Residues 308–323 (SIRNRTSQISPKPTQQ) show a composition bias toward polar residues. Disordered regions lie at residues 308-332 (SIRN…KKER), 345-364 (VTDS…TTTT), 427-550 (GLKG…GNMG), 571-614 (GERG…APGP), 637-1332 (GPKG…DAGE), and 1377-1415 (IIGP…GPPG). Positions 424–1417 (ELTGLKGEPG…RGPPGPPGLP (994 aa)) are triple-helical region. Collagen-like domains are found at residues 425 to 478 (LTGL…GNPG), 493 to 552 (GLVG…MGPK), 556 to 615 (GFIG…PGPV), 622 to 681 (GDMG…PGLP), 685 to 744 (GKPG…PGLE), 748 to 807 (GPVG…MGLA), and 811 to 870 (GDRG…RGPD). Positions 434-444 (LPGPPGPPGQP) are enriched in pro residues. Residues 491 to 506 (DPGLVGLPGQPGQPGR) are compositionally biased toward low complexity. 2 stretches are compositionally biased toward low complexity: residues 657–666 (LGLPGEPGEP) and 678–692 (PGLP…PQGK). Residues 733-742 (GIPGPGGLPG) show a composition bias toward gly residues. 2 stretches are compositionally biased toward low complexity: residues 837-852 (RGLS…HGSR) and 875-890 (EKGM…PPGK). 8 Collagen-like domains span residues 892–951 (GLSG…IGLP), 952–1011 (GKAG…VGLE), 1024–1083 (GTEG…IGPK), 1084–1137 (GSRG…DGKV), 1139–1198 (GPPG…KGSK), 1199–1258 (GNKG…PGDL), 1268–1327 (GKPG…KGQP), and 1361–1420 (GPQG…PAVA). Positions 1040-1058 (PEGKPGKIGERGKPGEKGS) are enriched in basic and acidic residues. Residues 1112-1124 (HQGPQGSLGSPGP) show a composition bias toward low complexity. Residues 1125–1137 (KGEKGEQGDDGKV) show a composition bias toward basic and acidic residues. The segment covering 1215 to 1230 (NRGSPGPVGVPGPRGV) has biased composition (low complexity). Residues 1307-1316 (GLNGGMGFPG) are compositionally biased toward gly residues. The segment covering 1402–1415 (RGPPGPRGPPGPPG) has biased composition (pro residues). A propeptide spans 1421-1658 (FSHENEALGA…HLEVGPVCFL (238 aa)) (C-terminal propeptide). The Fibrillar collagen NC1 domain occupies 1458-1658 (SEIFKTLHYL…HLEVGPVCFL (201 aa)). Cystine bridges form between cysteine 1488–cysteine 1520, cysteine 1529–cysteine 1656, and cysteine 1565–cysteine 1609. The Ca(2+) site is built by aspartate 1506, asparagine 1508, cysteine 1511, and aspartate 1514. A glycan (N-linked (GlcNAc...) asparagine) is linked at asparagine 1567.

This sequence belongs to the fibrillar collagen family. In terms of tissue distribution, weakly expressed in the notochord from the 6 somite stage. Expressed throughout the notochord at 13 somites, then becomes restricted to the distal tip of the notochord by 24 hpf. Also expressed in head cartilages by 48 hpf.

It localises to the secreted. It is found in the extracellular space. Its subcellular location is the extracellular matrix. Functionally, may play a role during the calcification of cartilage and the transition of cartilage to bone. Together with col27a1a, plays a role in development of the notochord and axial skeleton. The sequence is that of Collagen alpha-1(XXVII) chain B (col27a1b) from Danio rerio (Zebrafish).